The following is an 82-amino-acid chain: UPF0213 protein SH2523 (82 aa).

Residues 2-77 (AKHYVYIVKC…KTFSRQQKLK (76 aa)) enclose the GIY-YIG domain.

It belongs to the UPF0213 family.

In Staphylococcus haemolyticus (strain JCSC1435), this protein is UPF0213 protein SH2523.